We begin with the raw amino-acid sequence, 133 residues long: Histone H2A.1 (133 aa).

The interval 1 to 23 (MSTTGKGGKAKGKTASSKQVSRS) is disordered. Ser-2 is modified (N-acetylserine). N6-acetyllysine is present on residues Lys-6, Lys-9, Lys-11, Lys-13, and Lys-18. Ser-123 carries the phosphoserine modification. Lys-124 participates in a covalent cross-link: Glycyl lysine isopeptide (Lys-Gly) (interchain with G-Cter in ubiquitin).

The protein belongs to the histone H2A family. The nucleosome is a histone octamer containing two molecules each of H2A, H2B, H3 and H4 assembled in one H3-H4 heterotetramer and two H2A-H2B heterodimers. The octamer wraps approximately 147 bp of DNA. In terms of processing, monoubiquitination of Lys-124 gives a specific tag for epigenetic transcriptional repression. Post-translationally, acetylation occurs almost exclusively in the MAC.

It is found in the nucleus. It localises to the chromosome. Its function is as follows. Core component of nucleosome. Nucleosomes wrap and compact DNA into chromatin, limiting DNA accessibility to the cellular machineries which require DNA as a template. Histones thereby play a central role in transcription regulation, DNA repair, DNA replication and chromosomal stability. DNA accessibility is regulated via a complex set of post-translational modifications of histones, also called histone code, and nucleosome remodeling. This chain is Histone H2A.1 (HTA2), found in Tetrahymena thermophila (strain SB210).